The sequence spans 227 residues: Cytochrome c oxidase subunit 2 (227 aa).

Residues 1–14 are Mitochondrial intermembrane-facing; it reads MAYPVQLGFQDAAS. A helical transmembrane segment spans residues 15–45; that stretch reads PIMEELLYFHDHTLMIMFLISSLVLYIISLM. The Mitochondrial matrix segment spans residues 46–59; sequence LTTELMHTNTMDAQ. The helical transmembrane segment at 60–87 threads the bilayer; sequence EVETVWTILPAAILILIALPSLRILYMM. The Mitochondrial intermembrane segment spans residues 88-227; it reads DEITTPSLTL…HFEEWLLSML (140 aa). Cu cation is bound by residues H161, C196, E198, C200, H204, and M207. E198 lines the Mg(2+) pocket.

The protein belongs to the cytochrome c oxidase subunit 2 family. As to quaternary structure, component of the cytochrome c oxidase (complex IV, CIV), a multisubunit enzyme composed of 14 subunits. The complex is composed of a catalytic core of 3 subunits MT-CO1, MT-CO2 and MT-CO3, encoded in the mitochondrial DNA, and 11 supernumerary subunits COX4I, COX5A, COX5B, COX6A, COX6B, COX6C, COX7A, COX7B, COX7C, COX8 and NDUFA4, which are encoded in the nuclear genome. The complex exists as a monomer or a dimer and forms supercomplexes (SCs) in the inner mitochondrial membrane with NADH-ubiquinone oxidoreductase (complex I, CI) and ubiquinol-cytochrome c oxidoreductase (cytochrome b-c1 complex, complex III, CIII), resulting in different assemblies (supercomplex SCI(1)III(2)IV(1) and megacomplex MCI(2)III(2)IV(2)). Found in a complex with TMEM177, COA6, COX18, COX20, SCO1 and SCO2. Interacts with TMEM177 in a COX20-dependent manner. Interacts with COX20. Interacts with COX16. Cu cation serves as cofactor.

It localises to the mitochondrion inner membrane. The enzyme catalyses 4 Fe(II)-[cytochrome c] + O2 + 8 H(+)(in) = 4 Fe(III)-[cytochrome c] + 2 H2O + 4 H(+)(out). Component of the cytochrome c oxidase, the last enzyme in the mitochondrial electron transport chain which drives oxidative phosphorylation. The respiratory chain contains 3 multisubunit complexes succinate dehydrogenase (complex II, CII), ubiquinol-cytochrome c oxidoreductase (cytochrome b-c1 complex, complex III, CIII) and cytochrome c oxidase (complex IV, CIV), that cooperate to transfer electrons derived from NADH and succinate to molecular oxygen, creating an electrochemical gradient over the inner membrane that drives transmembrane transport and the ATP synthase. Cytochrome c oxidase is the component of the respiratory chain that catalyzes the reduction of oxygen to water. Electrons originating from reduced cytochrome c in the intermembrane space (IMS) are transferred via the dinuclear copper A center (CU(A)) of subunit 2 and heme A of subunit 1 to the active site in subunit 1, a binuclear center (BNC) formed by heme A3 and copper B (CU(B)). The BNC reduces molecular oxygen to 2 water molecules using 4 electrons from cytochrome c in the IMS and 4 protons from the mitochondrial matrix. The chain is Cytochrome c oxidase subunit 2 (MT-CO2) from Hapalemur griseus (Gray gentle lemur).